We begin with the raw amino-acid sequence, 500 residues long: Gamma-glutamylanilide synthase (500 aa).

Residues 32–136 (LGLEMIRLSW…MLADLHWKSG (105 aa)) enclose the GS beta-grasp domain. The GS catalytic domain occupies 143 to 500 (PRGIMKKAVK…WEQKEYFNLL (358 aa)).

This sequence belongs to the glutamine synthetase family. As to quaternary structure, homohexamer.

It carries out the reaction aniline + L-glutamate + ATP = N(5)-phenyl-L-glutamine + ADP + phosphate. Its function is as follows. Involved in the initial oxidation of aniline to catechol by the release of its amino group. Catalyzes the ATP-dependent ligation of L-glutamate to aniline to yield gamma-glutamylanilide (gamma-GA). AtdA1 has a broad substrate range and is able to convert the following anilines, including chlorinated and methylated forms of aniline: aniline (100%), o-chloroaniline (92%), m-chloroaniline (69%), p-chloroaniline (92%), o-methylaniline (40%), m-methylaniline (27%) and p-methylaniline (45%). This Acinetobacter sp protein is Gamma-glutamylanilide synthase.